A 102-amino-acid chain; its full sequence is MSKIKIKLKSFDADLIEEVSKKFVAFAKSKDIKMSGPIPLPTKIERITILRSVHVNKDSREQFESRTHKRLIIFENLDKKMLDALKRQEISTGVQVEIKEIN.

This sequence belongs to the universal ribosomal protein uS10 family. In terms of assembly, part of the 30S ribosomal subunit.

Functionally, involved in the binding of tRNA to the ribosomes. The polypeptide is Small ribosomal subunit protein uS10 (Mycoplasma mobile (strain ATCC 43663 / 163K / NCTC 11711) (Mesomycoplasma mobile)).